The primary structure comprises 220 residues: Sugar transporter SWEET1 (220 aa).

7 consecutive transmembrane segments (helical) span residues 9 to 29 (LMTFIQFCATFITITLFIMPL), 44 to 64 (VAGLQFISSVLNCFLWISYAL), 70 to 90 (TMLFVNSIGMMFSIYYVFNYW), 106 to 126 (VMIACVLAITIISISYYNTVD), 138 to 158 (LSSVVCVLMFASPLEKMAIVI), 167 to 187 (IINVAILSLLCGLSWTIFGLL), and 191 to 211 (IYIYLPNILASILSFVQLTLI). Residues 12-92 (FIQFCATFIT…IYYVFNYWKN (81 aa)) enclose the MtN3/slv 1 domain. The 84-residue stretch at 134–217 (RLGFLSSVVC…LTLIKLYPPQ (84 aa)) folds into the MtN3/slv 2 domain.

This sequence belongs to the SWEET sugar transporter family.

Its subcellular location is the golgi apparatus membrane. The protein localises to the cell membrane. Its function is as follows. Mediates both low-affinity uptake and efflux of sugar across the membrane. The polypeptide is Sugar transporter SWEET1 (slc50a1) (Dictyostelium discoideum (Social amoeba)).